The sequence spans 327 residues: Aldo-keto reductase family 7 member A3 (327 aa).

Ser2 carries the phosphoserine modification. Residues Met13, Arg18, and Asp40 each coordinate NADP(+). Residue Tyr45 is the Proton donor of the active site. His109 is a binding site for citrate. Asn140, Asn194, Leu196, Gly198, Arg204, and Arg218 together coordinate NADP(+). The citrate site is built by Tyr228 and Arg231. Positions 286, 290, 293, 294, and 327 each coordinate NADP(+).

It belongs to the aldo/keto reductase family. Aldo/keto reductase 2 subfamily. Homodimer. Heterodimer with AKR7A2.

Its subcellular location is the cytoplasm. It catalyses the reaction a primary alcohol + NADP(+) = an aldehyde + NADPH + H(+). The catalysed reaction is aflatoxin B1 dialdehyde + NADPH + H(+) = aflatoxin B1 C(6a)-monoaldehyde + NADP(+). The enzyme catalyses aflatoxin B1 dialdehyde + NADPH + H(+) = aflatoxin B1 C(8)-monoaldehyde + NADP(+). It carries out the reaction aflatoxin B1 C(6a)-monoaldehyde + NADPH + 2 H(+) = aflatoxin B1 triol + NADP(+). Inhibited by citrate. In terms of biological role, catalyzes the NADPH-dependent reduction of various carbonyl-containing compounds, including aldehydes, ketones, and toxic products from cellular metabolism or environmental exposure. Can reduce the dialdehyde form of aflatoxin B1 (AFB1) into alcohol derivatives, via monoaldehydes intermediates, thus preventing the formation of protein adducts that contribute to AFB1-induced toxicity. The protein is Aldo-keto reductase family 7 member A3 of Rattus norvegicus (Rat).